Here is a 440-residue protein sequence, read N- to C-terminus: MFLPQEIIRKKRDGHALSDEEIRSFINGVRDNSVSEGQIAALAMAIWFRDITLPERVALTMAMRDSGSVLCWKGLDLNGPVVDKHSTGGVGDVTSLMLGPMVAACGGYVPMISGRGLGHTGGTLDKLEAIPGFDIFPSDDRFREIIKQVGIAIVGQTRSLAPADKRFYATRDITATVDSIPLIAASILGKKLAEGLDALVMDVKVGSGALMPTLEQSEALAQAIFGVANGAGCKTTVLLTDMNQPLASSAGNALEVREAVQFLTGEYRNPRLLEVTMALCREMLLSGGLAQSDAEAQAKLQAVLDNGAAAEAFARMVAAQQGPADFIERIDSYLPAPMLSKAVYATTSGIVSTMDTRALGMAVVALGGGRRRASDSIDYSVGLSHLVQPGDKVDGERPLAVIHAASEASWQQAAQAVQHAVMVGQQQPASTAVIYRRISQ.

This sequence belongs to the thymidine/pyrimidine-nucleoside phosphorylase family. As to quaternary structure, homodimer.

The catalysed reaction is thymidine + phosphate = 2-deoxy-alpha-D-ribose 1-phosphate + thymine. Its pathway is pyrimidine metabolism; dTMP biosynthesis via salvage pathway; dTMP from thymine: step 1/2. Its function is as follows. The enzymes which catalyze the reversible phosphorolysis of pyrimidine nucleosides are involved in the degradation of these compounds and in their utilization as carbon and energy sources, or in the rescue of pyrimidine bases for nucleotide synthesis. The sequence is that of Thymidine phosphorylase from Erwinia tasmaniensis (strain DSM 17950 / CFBP 7177 / CIP 109463 / NCPPB 4357 / Et1/99).